The following is a 236-amino-acid chain: Phosphoribosylaminoimidazole-succinocarboxamide synthase (236 aa).

This sequence belongs to the SAICAR synthetase family.

It carries out the reaction 5-amino-1-(5-phospho-D-ribosyl)imidazole-4-carboxylate + L-aspartate + ATP = (2S)-2-[5-amino-1-(5-phospho-beta-D-ribosyl)imidazole-4-carboxamido]succinate + ADP + phosphate + 2 H(+). It participates in purine metabolism; IMP biosynthesis via de novo pathway; 5-amino-1-(5-phospho-D-ribosyl)imidazole-4-carboxamide from 5-amino-1-(5-phospho-D-ribosyl)imidazole-4-carboxylate: step 1/2. The chain is Phosphoribosylaminoimidazole-succinocarboxamide synthase from Campylobacter jejuni subsp. jejuni serotype O:2 (strain ATCC 700819 / NCTC 11168).